We begin with the raw amino-acid sequence, 331 residues long: L-lactate dehydrogenase A chain (331 aa).

NAD(+) is bound by residues 29-57 (GMVG…MEDK) and Arg-98. Positions 105, 137, and 168 each coordinate substrate. Asn-137 serves as a coordination point for NAD(+). Residue His-192 is the Proton acceptor of the active site. Thr-247 lines the substrate pocket.

It belongs to the LDH/MDH superfamily. LDH family. Homotetramer.

The protein localises to the cytoplasm. The catalysed reaction is (S)-lactate + NAD(+) = pyruvate + NADH + H(+). The protein operates within fermentation; pyruvate fermentation to lactate; (S)-lactate from pyruvate: step 1/1. Interconverts simultaneously and stereospecifically pyruvate and lactate with concomitant interconversion of NADH and NAD(+). In Patagonotothen tessellata (Black southern cod), this protein is L-lactate dehydrogenase A chain (ldha).